We begin with the raw amino-acid sequence, 106 residues long: Integration host factor subunit alpha (106 aa).

It belongs to the bacterial histone-like protein family. As to quaternary structure, heterodimer of an alpha and a beta chain.

This protein is one of the two subunits of integration host factor, a specific DNA-binding protein that functions in genetic recombination as well as in transcriptional and translational control. The chain is Integration host factor subunit alpha from Paramagnetospirillum magneticum (strain ATCC 700264 / AMB-1) (Magnetospirillum magneticum).